Reading from the N-terminus, the 390-residue chain is 8-amino-7-oxononanoate synthase (390 aa).

Residue R19 participates in substrate binding. 106-107 serves as a coordination point for pyridoxal 5'-phosphate; sequence GY. H131 provides a ligand contact to substrate. Pyridoxal 5'-phosphate-binding residues include S176, H204, and T233. N6-(pyridoxal phosphate)lysine is present on K236. T350 provides a ligand contact to substrate.

It belongs to the class-II pyridoxal-phosphate-dependent aminotransferase family. BioF subfamily. Homodimer. The cofactor is pyridoxal 5'-phosphate.

It catalyses the reaction 6-carboxyhexanoyl-[ACP] + L-alanine + H(+) = (8S)-8-amino-7-oxononanoate + holo-[ACP] + CO2. The protein operates within cofactor biosynthesis; biotin biosynthesis. Its function is as follows. Catalyzes the decarboxylative condensation of pimeloyl-[acyl-carrier protein] and L-alanine to produce 8-amino-7-oxononanoate (AON), [acyl-carrier protein], and carbon dioxide. This Pseudomonas putida (strain W619) protein is 8-amino-7-oxononanoate synthase.